We begin with the raw amino-acid sequence, 117 residues long: Large ribosomal subunit protein bL19 (117 aa).

This sequence belongs to the bacterial ribosomal protein bL19 family.

In terms of biological role, this protein is located at the 30S-50S ribosomal subunit interface and may play a role in the structure and function of the aminoacyl-tRNA binding site. The chain is Large ribosomal subunit protein bL19 from Cutibacterium acnes (strain DSM 16379 / KPA171202) (Propionibacterium acnes).